Reading from the N-terminus, the 502-residue chain is uncharacterized protein (502 aa).

The chain crosses the membrane as a helical span at residues 1–21 (MKIFLVFLSVFFFNGCFGLVY). PLD phosphodiesterase domains are found at residues 162–189 (IKKR…GDNY) and 396–423 (TKHS…DPRS).

Belongs to the phospholipase D family. Cardiolipin synthase subfamily.

Its subcellular location is the cell membrane. This is an uncharacterized protein from Helicobacter pylori (strain ATCC 700392 / 26695) (Campylobacter pylori).